Here is a 365-residue protein sequence, read N- to C-terminus: MNIMDFNVKKLAADAGTFLSRAVQFTEEKLGQAEKTELDAHLENLLSKAECTKIWTEKIMKQTEVLLQPNPNARIEEFVYEKLDRKAPSRINNPELLGQYMIDAGTEFGPGTAYGNALIKCGETQKRIGTADRELIQTSALNFLTPLRNFIEGDYKTIAKERKLLQNKRLDLDAAKTRLKKAKAAETRNSSEQELRITQSEFDRQAEITRLLLEGISSTHAHHLRCLNDFVEAQMTYYAQCYQYMLDLQKQLGSFPSNYLSNNNQTSVTPVPSVLPNAIGSSAMASTSGLVITSPSNLSDLKECSGSRKARVLYDYDAANSTELSLLADEVITVFSVVGMDSDWLMGERGNQKGKVPITYLELLN.

Position 1 is an N-acetylmethionine (Met1). The segment at 1-30 is membrane-binding amphipathic helix; sequence MNIMDFNVKKLAADAGTFLSRAVQFTEEKL. Residues 1 to 37 form a required for membrane binding region; the sequence is MNIMDFNVKKLAADAGTFLSRAVQFTEEKLGQAEKTE. The BAR domain occupies 27–261; sequence EEKLGQAEKT…LGSFPSNYLS (235 aa). Thr145 carries the phosphothreonine; by CDK5 modification. A coiled-coil region spans residues 155–195; the sequence is YKTIAKERKLLQNKRLDLDAAKTRLKKAKAAETRNSSEQEL. Residues 305–365 form the SH3 domain; that stretch reads SGSRKARVLY…VPITYLELLN (61 aa).

Belongs to the endophilin family. In terms of assembly, homodimer, and heterodimer with SH3GLB2. Binds BAX; induction of apoptosis augments BAX binding. Binds DNM1, HTT, AMPH, BIN1 and ARFGAP1. Interacts with UVRAG; UVRAG bridges the interaction to BECN1 indicative for an association with the PI3K complex II (PI3KC3-C2). Post-translationally, phosphorylated at Thr-145 by CDK5; this phosphorylation is required for autophagy induction in starved neurons and facilitates homodimerization. In terms of tissue distribution, highly expressed in heart, skeletal muscle, kidney and placenta. Detected at lower levels in brain, colon, thymus, spleen, liver, small intestine, lung and peripheral blood leukocytes.

Its subcellular location is the cytoplasm. The protein localises to the golgi apparatus membrane. It is found in the mitochondrion outer membrane. It localises to the cytoplasmic vesicle. The protein resides in the autophagosome membrane. Its subcellular location is the midbody. In terms of biological role, may be required for normal outer mitochondrial membrane dynamics. Required for coatomer-mediated retrograde transport in certain cells. May recruit other proteins to membranes with high curvature. May promote membrane fusion. Involved in activation of caspase-dependent apoptosis by promoting BAX/BAK1 activation. Isoform 1 acts proapoptotic in fibroblasts. Involved in caspase-independent apoptosis during nutrition starvation and involved in the regulation of autophagy. Activates lipid kinase activity of PIK3C3 during autophagy probably by associating with the PI3K complex II (PI3KC3-C2). Associated with PI3KC3-C2 during autophagy may regulate the trafficking of ATG9A from the Golgi complex to the peripheral cytoplasm for the formation of autophagosomes by inducing Golgi membrane tubulation and fragmentation. Involved in regulation of degradative endocytic trafficking and cytokinesis, probably in the context of PI3KC3-C2. Isoform 2 acts antiapoptotic in neuronal cells; involved in maintenance of mitochondrial morphology and promotes neuronal viability. This is Endophilin-B1 (SH3GLB1) from Homo sapiens (Human).